The sequence spans 1503 residues: E3 ubiquitin-protein ligase listerin (1503 aa).

HEAT repeat units follow at residues 52–89 (SGID…ETSS), 93–129 (CYEH…KLEK), 133–170 (KGLK…ADKK), 280–318 (LNTP…SAQF), 323–345 (SLQN…HWRV), 346–384 (LQHF…NLPW), 552–589 (GDIV…TGGS), 640–663 (AENV…NEAE), 664–700 (KNVL…DFNS), 845–882 (LEKR…LDDS), 1022–1065 (TLFI…RMFR), 1078–1117 (RTLL…SLLE), 1141–1183 (AAAK…VMIS), and 1302–1340 (FKSI…KLLI). An RING-type zinc finger spans residues 1446–1499 (CTICMMTVHQQTNQLPKVKCKQCKNRFHSNCLVSSFHTYKWFESSNQSTCPLCR).

It belongs to the LTN1 family. As to quaternary structure, component of the ribosome quality control complex (RQC), composed of at least the E3 ubiquitin ligase ltn1 and nemf. The complex probably also contains tcf25 as well as vcp/p97 and its ubiquitin-binding cofactors. RQC forms a stable complex with 60S ribosomal subunits.

It is found in the cytoplasm. The protein localises to the cytosol. It carries out the reaction S-ubiquitinyl-[E2 ubiquitin-conjugating enzyme]-L-cysteine + [acceptor protein]-L-lysine = [E2 ubiquitin-conjugating enzyme]-L-cysteine + N(6)-ubiquitinyl-[acceptor protein]-L-lysine.. Its pathway is protein modification; protein ubiquitination. Its function is as follows. E3 ubiquitin-protein ligase. Component of the ribosome quality control complex (RQC), a ribosome-associated complex that mediates ubiquitination and extraction of incompletely synthesized nascent chains for proteasomal degradation. Ubiquitination leads to vcp/p97 recruitment for extraction and degradation of the incomplete translation product. The polypeptide is E3 ubiquitin-protein ligase listerin (Caenorhabditis briggsae).